Reading from the N-terminus, the 229-residue chain is Protein FMP52-2, mitochondrial (229 aa).

A mitochondrion-targeting transit peptide spans 1 to 45; it reads MAAGAFILGSTGLCGYQMLRFAEKSSLFDKISTVGRKLPDFKSEK.

The protein belongs to the FMP52 family.

It localises to the mitochondrion outer membrane. This chain is Protein FMP52-2, mitochondrial (FMP522), found in Scheffersomyces stipitis (strain ATCC 58785 / CBS 6054 / NBRC 10063 / NRRL Y-11545) (Yeast).